A 36-amino-acid chain; its full sequence is Potassium channel toxin alpha-KTx 16.5 (36 aa).

Intrachain disulfides connect cysteine 7–cysteine 28, cysteine 13–cysteine 33, and cysteine 17–cysteine 35. Residues 26–33 (GKCQNKQC) are interaction with Ca(2+)-activated K(+) channels.

This sequence belongs to the short scorpion toxin superfamily. Potassium channel inhibitor family. Alpha-KTx 16 subfamily. In terms of tissue distribution, expressed by the venom gland.

The protein resides in the secreted. In terms of biological role, augments responses to direct muscle stimulation probably by blocking calcium-activated potassium channels. In Leiurus hebraeus (Hebrew deathstalker scorpion), this protein is Potassium channel toxin alpha-KTx 16.5.